The following is a 42-amino-acid chain: Photosystem II reaction center protein J (42 aa).

A helical transmembrane segment spans residues 10–30; it reads IPLWLVGTVAGILVLGLVGLF.

Belongs to the PsbJ family. PSII is composed of 1 copy each of membrane proteins PsbA, PsbB, PsbC, PsbD, PsbE, PsbF, PsbH, PsbI, PsbJ, PsbK, PsbL, PsbM, PsbT, PsbX, PsbY, PsbZ, Psb30/Ycf12, at least 3 peripheral proteins of the oxygen-evolving complex and a large number of cofactors. It forms dimeric complexes.

Its subcellular location is the plastid. It localises to the chloroplast thylakoid membrane. One of the components of the core complex of photosystem II (PSII). PSII is a light-driven water:plastoquinone oxidoreductase that uses light energy to abstract electrons from H(2)O, generating O(2) and a proton gradient subsequently used for ATP formation. It consists of a core antenna complex that captures photons, and an electron transfer chain that converts photonic excitation into a charge separation. This Staurastrum punctulatum (Green alga) protein is Photosystem II reaction center protein J.